The chain runs to 197 residues: Holliday junction branch migration complex subunit RuvA (197 aa).

Residues 1–64 (MYEYIKGKYI…EDFIGVYGFL (64 aa)) are domain I. The domain II stretch occupies residues 65–143 (TKDELSMFKL…IDILEEDDEQ (79 aa)). Residues 144 to 148 (TINKV) are flexible linker. Residues 149–197 (TDDKKVLEAVAALITLGYSEKEANKVINSCDKNNSLEQIIKEALKYLMK) form a domain III region.

This sequence belongs to the RuvA family. As to quaternary structure, homotetramer. Forms an RuvA(8)-RuvB(12)-Holliday junction (HJ) complex. HJ DNA is sandwiched between 2 RuvA tetramers; dsDNA enters through RuvA and exits via RuvB. An RuvB hexamer assembles on each DNA strand where it exits the tetramer. Each RuvB hexamer is contacted by two RuvA subunits (via domain III) on 2 adjacent RuvB subunits; this complex drives branch migration. In the full resolvosome a probable DNA-RuvA(4)-RuvB(12)-RuvC(2) complex forms which resolves the HJ.

Its subcellular location is the cytoplasm. Its function is as follows. The RuvA-RuvB-RuvC complex processes Holliday junction (HJ) DNA during genetic recombination and DNA repair, while the RuvA-RuvB complex plays an important role in the rescue of blocked DNA replication forks via replication fork reversal (RFR). RuvA specifically binds to HJ cruciform DNA, conferring on it an open structure. The RuvB hexamer acts as an ATP-dependent pump, pulling dsDNA into and through the RuvAB complex. HJ branch migration allows RuvC to scan DNA until it finds its consensus sequence, where it cleaves and resolves the cruciform DNA. In Clostridium botulinum (strain 657 / Type Ba4), this protein is Holliday junction branch migration complex subunit RuvA.